We begin with the raw amino-acid sequence, 207 residues long: Large ribosomal subunit protein bL25 (207 aa).

The disordered stretch occupies residues 186–207; sequence SKPRGGAGAEGEADAEGEAAAE. The span at 196–207 shows a compositional bias: acidic residues; the sequence is GEADAEGEAAAE.

Belongs to the bacterial ribosomal protein bL25 family. CTC subfamily. In terms of assembly, part of the 50S ribosomal subunit; part of the 5S rRNA/L5/L18/L25 subcomplex. Contacts the 5S rRNA. Binds to the 5S rRNA independently of L5 and L18.

Its function is as follows. This is one of the proteins that binds to the 5S RNA in the ribosome where it forms part of the central protuberance. The chain is Large ribosomal subunit protein bL25 from Methylobacillus flagellatus (strain ATCC 51484 / DSM 6875 / VKM B-1610 / KT).